Reading from the N-terminus, the 241-residue chain is Large ribosomal subunit protein uL3 (241 aa).

Gln157 is modified (N5-methylglutamine).

Belongs to the universal ribosomal protein uL3 family. In terms of assembly, part of the 50S ribosomal subunit. Forms a cluster with proteins L14 and L19. Methylated by PrmB.

One of the primary rRNA binding proteins, it binds directly near the 3'-end of the 23S rRNA, where it nucleates assembly of the 50S subunit. The chain is Large ribosomal subunit protein uL3 from Vesicomyosocius okutanii subsp. Calyptogena okutanii (strain HA).